Consider the following 226-residue polypeptide: Low-molecular weight cobalt-containing nitrile hydratase subunit beta (226 aa).

Residues 1–22 (MDGIHDLGGRAGLGPIKPESDE) form a disordered region.

Belongs to the nitrile hydratase subunit beta family. In terms of assembly, heterodimer of an alpha and a beta chain.

The catalysed reaction is an aliphatic primary amide = an aliphatic nitrile + H2O. NHase catalyzes the hydration of various nitrile compounds to the corresponding amides. The chain is Low-molecular weight cobalt-containing nitrile hydratase subunit beta from Rhodococcus rhodochrous.